A 362-amino-acid chain; its full sequence is Atypical chemokine receptor 3 (362 aa).

At Met1–Lys40 the chain is on the extracellular side. 3 N-linked (GlcNAc...) asparagine glycosylation sites follow: Asn13, Asn22, and Asn39. A helical transmembrane segment spans residues Ser41 to Ala61. Residues Asn62–Cys81 lie on the Cytoplasmic side of the membrane. A helical membrane pass occupies residues Tyr82 to Val102. Residues Ser103–Lys118 lie on the Extracellular side of the membrane. Residues Cys117 and Cys196 are joined by a disulfide bond. The helical transmembrane segment at Ile119 to Ser139 threads the bilayer. Residues Val140–Arg162 are Cytoplasmic-facing. The helical transmembrane segment at Ala163–Leu183 threads the bilayer. Residues Lys184–Glu213 are Extracellular-facing. Residues Leu214–Leu234 traverse the membrane as a helical segment. Residues Leu235–Lys252 are Cytoplasmic-facing. Residues Ile253–Leu273 traverse the membrane as a helical segment. Residues Leu274–Ala296 lie on the Extracellular side of the membrane. A helical transmembrane segment spans residues Leu297–Asn319. The Cytoplasmic segment spans residues Arg320–Lys362. Positions Tyr324–Lys362 are C-terminal cytoplasmic tail. 3 positions are modified to phosphoserine: Ser347, Ser350, and Ser355.

It belongs to the G-protein coupled receptor 1 family. Atypical chemokine receptor subfamily. In terms of assembly, homodimer. Can form heterodimers with CXCR4; heterodimerization may regulate CXCR4 signaling activity. Interacts with ARRB1 and ARRB2. The Ser/Thr residues in the C-terminal cytoplasmic tail may be phosphorylated. Post-translationally, ubiquitinated at the Lys residues in its C-terminal cytoplasmic tail and is essential for correct trafficking from and to the cell membrane. Deubiquitinated by CXCL12-stimulation in a reversible manner.

It localises to the cell membrane. Its subcellular location is the early endosome. The protein resides in the recycling endosome. Its function is as follows. Atypical chemokine receptor that controls chemokine levels and localization via high-affinity chemokine binding that is uncoupled from classic ligand-driven signal transduction cascades, resulting instead in chemokine sequestration, degradation, or transcytosis. Also known as interceptor (internalizing receptor) or chemokine-scavenging receptor or chemokine decoy receptor. Acts as a receptor for chemokines CXCL11 and CXCL12/SDF1. Chemokine binding does not activate G-protein-mediated signal transduction but instead induces beta-arrestin recruitment, leading to ligand internalization and activation of MAPK signaling pathway. Required for regulation of CXCR4 protein levels in migrating interneurons, thereby adapting their chemokine responsiveness. In glioma cells, transduces signals via MEK/ERK pathway, mediating resistance to apoptosis. Promotes cell growth and survival. Not involved in cell migration, adhesion or proliferation of normal hematopoietic progenitors but activated by CXCL11 in malignant hemapoietic cells, leading to phosphorylation of ERK1/2 (MAPK3/MAPK1) and enhanced cell adhesion and migration. Plays a regulatory role in CXCR4-mediated activation of cell surface integrins by CXCL12. Required for heart valve development. Regulates axon guidance in the oculomotor system through the regulation of CXCL12 levels. The sequence is that of Atypical chemokine receptor 3 (ACKR3) from Canis lupus familiaris (Dog).